The sequence spans 204 residues: Synaptosomal-associated protein 25-A (204 aa).

A compositionally biased stretch (basic and acidic residues) spans 1–11; sequence MAEDADMRNEL. Positions 1–25 are disordered; the sequence is MAEDADMRNELSDMQQRADQLADES. 2 t-SNARE coiled-coil homology domains span residues 19-81 and 138-200; these read DQLA…LNDL and DARE…ATKM.

This sequence belongs to the SNAP-25 family.

The protein localises to the synapse. The protein resides in the synaptosome. Its subcellular location is the cell membrane. In terms of biological role, may play an important role in the synaptic function of specific neuronal systems. Associates with proteins involved in vesicle docking and membrane fusion. The sequence is that of Synaptosomal-associated protein 25-A (snap25a) from Carassius auratus (Goldfish).